A 628-amino-acid polypeptide reads, in one-letter code: Leucine-rich repeat and fibronectin type-III domain-containing protein 3 (628 aa).

The signal sequence occupies residues Met1–Ala16. Over Ser17–Met539 the chain is Extracellular. One can recognise an LRRNT domain in the interval Pro19–Arg59. LRR repeat units lie at residues Arg60 to Thr83, Gly84 to Asp105, Ala108 to Gly129, Asn132 to Asp153, Thr157 to Arg178, Asn181 to Arg202, and Lys205 to Ser226. Asn81 carries an N-linked (GlcNAc...) asparagine glycan. The LRRCT domain maps to Asn249–Pro295. The region spanning Pro295–Thr382 is the Ig-like domain. An intrachain disulfide couples Cys317 to Cys366. N-linked (GlcNAc...) asparagine glycosylation is found at Asn339, Asn348, and Asn393. Residues Thr382–Gly430 are disordered. Residues Asp406 to Asp422 show a composition bias toward low complexity. The Fibronectin type-III domain maps to Pro425–Ala523. An N-linked (GlcNAc...) asparagine glycan is attached at Asn462. The helical transmembrane segment at Ile540 to Met560 threads the bilayer. The Cytoplasmic portion of the chain corresponds to Arg561 to Pro628.

Belongs to the LRFN family. As to quaternary structure, can form heteromeric complexes with LRFN1, LRFN2, LRFN4 and LRFN5. Able to form homomeric complexes across cell junctions, between adjacent cells. Does not interact with DLG4. Post-translationally, N-glycosylated.

It localises to the cell membrane. The protein resides in the cell projection. Its subcellular location is the axon. The protein localises to the dendrite. It is found in the synapse. It localises to the presynaptic cell membrane. The protein resides in the postsynaptic cell membrane. Functionally, cell adhesion molecule that mediates homophilic cell-cell adhesion in a Ca(2+)-independent manner. Promotes neurite outgrowth in hippocampal neurons. This is Leucine-rich repeat and fibronectin type-III domain-containing protein 3 (LRFN3) from Homo sapiens (Human).